A 1471-amino-acid polypeptide reads, in one-letter code: Myosin-51 (1471 aa).

The Myosin N-terminal SH3-like domain occupies 7 to 61 (SVGSECWVSNNNGHWDAARLIEIKDNGGGKVVATVAKSSGVLETVNYQQLQNRNI). The region spanning 65–749 (ESPSDLTNLP…VIGNFEEAHR (685 aa)) is the Myosin motor domain. 159–166 (GESGAGKT) is an ATP binding site. Residues 628 to 650 (LSQLMTTVSSTNVHYIRCIKPNE) form an actin-binding region. 6 consecutive IQ domains span residues 753–773 (SKST…KEYQ), 776–796 (VKFI…QRFE), 801–821 (ERAA…KRYL), 824–844 (IKCA…SRYI), 849–869 (ESSA…KTFR), and 872–892 (KKSV…RYLR). A coiled-coil region spans residues 909-952 (KNLQASITEVSKQLKSNSKKVTVLRNKLNILNNSLSKWKCLIKK). The Dilute domain maps to 1171-1417 (EKPLQAVLYW…SKAVEALSCK (247 aa)).

It belongs to the TRAFAC class myosin-kinesin ATPase superfamily. Myosin family.

The protein resides in the cytoplasm. Involved in cytokinesis. The protein is Myosin-51 (myo51) of Schizosaccharomyces pombe (strain 972 / ATCC 24843) (Fission yeast).